The sequence spans 164 residues: NADH-quinone oxidoreductase subunit I (164 aa).

4Fe-4S ferredoxin-type domains follow at residues 55 to 85 (LRRY…IDAE) and 95 to 124 (TRYD…EGPN). Residues C65, C68, C71, C75, C104, C107, C110, and C114 each contribute to the [4Fe-4S] cluster site.

Belongs to the complex I 23 kDa subunit family. In terms of assembly, NDH-1 is composed of 14 different subunits. Subunits NuoA, H, J, K, L, M, N constitute the membrane sector of the complex. The cofactor is [4Fe-4S] cluster.

Its subcellular location is the cell inner membrane. It catalyses the reaction a quinone + NADH + 5 H(+)(in) = a quinol + NAD(+) + 4 H(+)(out). NDH-1 shuttles electrons from NADH, via FMN and iron-sulfur (Fe-S) centers, to quinones in the respiratory chain. The immediate electron acceptor for the enzyme in this species is believed to be ubiquinone. Couples the redox reaction to proton translocation (for every two electrons transferred, four hydrogen ions are translocated across the cytoplasmic membrane), and thus conserves the redox energy in a proton gradient. This chain is NADH-quinone oxidoreductase subunit I, found in Ruegeria sp. (strain TM1040) (Silicibacter sp.).